Reading from the N-terminus, the 309-residue chain is Homoserine kinase (309 aa).

Position 91–101 (91–101 (PIGSGLGSSAC)) interacts with ATP.

Belongs to the GHMP kinase family. Homoserine kinase subfamily.

Its subcellular location is the cytoplasm. The enzyme catalyses L-homoserine + ATP = O-phospho-L-homoserine + ADP + H(+). The protein operates within amino-acid biosynthesis; L-threonine biosynthesis; L-threonine from L-aspartate: step 4/5. Catalyzes the ATP-dependent phosphorylation of L-homoserine to L-homoserine phosphate. The polypeptide is Homoserine kinase (Salmonella dublin (strain CT_02021853)).